The primary structure comprises 107 residues: Large ribosomal subunit protein eL33A (107 aa).

N-acetylalanine; partial is present on A2. A Glycyl lysine isopeptide (Lys-Gly) (interchain with G-Cter in ubiquitin) cross-link involves residue K47.

The protein belongs to the eukaryotic ribosomal protein eL33 family. Component of the large ribosomal subunit (LSU). Mature yeast ribosomes consist of a small (40S) and a large (60S) subunit. The 40S small subunit contains 1 molecule of ribosomal RNA (18S rRNA) and 33 different proteins (encoded by 57 genes). The large 60S subunit contains 3 rRNA molecules (25S, 5.8S and 5S rRNA) and 46 different proteins (encoded by 81 genes). Post-translationally, N-terminally acetylated by acetyltransferase NatA.

The protein resides in the cytoplasm. Component of the ribosome, a large ribonucleoprotein complex responsible for the synthesis of proteins in the cell. The small ribosomal subunit (SSU) binds messenger RNAs (mRNAs) and translates the encoded message by selecting cognate aminoacyl-transfer RNA (tRNA) molecules. The large subunit (LSU) contains the ribosomal catalytic site termed the peptidyl transferase center (PTC), which catalyzes the formation of peptide bonds, thereby polymerizing the amino acids delivered by tRNAs into a polypeptide chain. The nascent polypeptides leave the ribosome through a tunnel in the LSU and interact with protein factors that function in enzymatic processing, targeting, and the membrane insertion of nascent chains at the exit of the ribosomal tunnel. The protein is Large ribosomal subunit protein eL33A of Saccharomyces cerevisiae (strain ATCC 204508 / S288c) (Baker's yeast).